The primary structure comprises 161 residues: AP-1 complex subunit sigma-1 (161 aa).

It belongs to the adaptor complexes small subunit family. Adaptor protein complex 1 (AP-1) is a heterotetramer composed of two large adaptins (gamma-type subunit and beta-type subunit), a medium adaptin (mu-type subunit) and a small adaptin (sigma-type subunit). In terms of tissue distribution, expressed in seedlings, roots, stems, leaves, flowers and siliques (developing fruits and seeds).

It is found in the golgi apparatus. The protein localises to the cytoplasmic vesicle. The protein resides in the clathrin-coated vesicle membrane. Functionally, subunit of clathrin-associated adaptor protein complex 1 that plays a role in protein sorting at the trans-Golgi network and early endosomes (TGN/EE). The AP complexes mediate the recruitment of clathrin to membranes and the recognition of sorting signals within the cytosolic tails of transmembrane cargo molecules. In Arabidopsis thaliana (Mouse-ear cress), this protein is AP-1 complex subunit sigma-1 (AAP19-1).